A 310-amino-acid chain; its full sequence is Olfactory receptor 8B12 (310 aa).

Residues 1 to 24 (MAAKNSSVTEFILEGLTHQPGLRI) are Extracellular-facing. A glycan (N-linked (GlcNAc...) asparagine) is linked at asparagine 5. The chain crosses the membrane as a helical span at residues 25-45 (PLFFLFLGFYTVTVVGNLGLI). The Cytoplasmic portion of the chain corresponds to 46–53 (TLIGLNSH). Residues 54 to 74 (LHTPMYFFLFNLSLIDFCFST) traverse the membrane as a helical segment. Residues 75–98 (TITPKMLMSFVSRKNIISFTGCMT) are Extracellular-facing. Residues cysteine 96 and cysteine 188 are joined by a disulfide bond. The chain crosses the membrane as a helical span at residues 99-119 (QLFFFCFFVVSESFILSAMAY). Over 120 to 138 (DRYVAICNPLLYTVTMSCQ) the chain is Cytoplasmic. A helical membrane pass occupies residues 139-159 (VCLLLLLGAYGMGFAGAMAHT). At 160–196 (GSIMNLTFCADNLVNHFMCDILPLLELSCNSSYMNEL) the chain is on the extracellular side. N-linked (GlcNAc...) asparagine glycans are attached at residues asparagine 164 and asparagine 189. The helical transmembrane segment at 197 to 216 (VVFIVVAVDVGMPIVTVFIS) threads the bilayer. The Cytoplasmic portion of the chain corresponds to 217–236 (YALILSSILHNSSTEGRSKA). Residues 237–257 (FSTCSSHIIVVSLFFGSGAFM) form a helical membrane-spanning segment. Over 258 to 270 (YLKPLSILPLEQG) the chain is Extracellular. Residues 271–291 (KVSSLFYTIIVPVLNPLIYSL) traverse the membrane as a helical segment. The Cytoplasmic portion of the chain corresponds to 292–310 (RNKDVKVALRRTLGRKIFS).

Belongs to the G-protein coupled receptor 1 family.

Its subcellular location is the cell membrane. Odorant receptor. The polypeptide is Olfactory receptor 8B12 (OR8B12) (Homo sapiens (Human)).